The sequence spans 93 residues: Large ribosomal subunit protein bL27 (93 aa).

Residues 1–22 (MAHKKAGGSSRNGRDSEGRRLG) form a disordered region.

This sequence belongs to the bacterial ribosomal protein bL27 family.

This Methylobacterium sp. (strain 4-46) protein is Large ribosomal subunit protein bL27.